The chain runs to 152 residues: UPF0178 protein CKL_3490 (152 aa).

Belongs to the UPF0178 family.

This chain is UPF0178 protein CKL_3490, found in Clostridium kluyveri (strain ATCC 8527 / DSM 555 / NBRC 12016 / NCIMB 10680 / K1).